A 444-amino-acid chain; its full sequence is U4/U6 snRNA-associated-splicing factor PRP24 (444 aa).

The segment covering 1–16 (MEYGHHARPDSKRPLD) has biased composition (basic and acidic residues). Residues 1–29 (MEYGHHARPDSKRPLDEGSPAAAGLTSKK) form a disordered region. The residue at position 19 (serine 19) is a Phosphoserine. RRM domains are found at residues 41–116 (TTVL…HLTE), 117–195 (CTLW…VSNP), and 210–289 (REIM…LADK).

As to quaternary structure, monomer. Interacts with U6 snRNA SNR6 and the LSM2-8 complex (small nuclear RNA); to chaperone formation of the U4/U6-U5 tri-snRNP (small nuclear ribonucleoprotein) assembly, the protein is displaced from the U4/U6 snRNP once pairing is complete.

It is found in the nucleus. In terms of biological role, functions as a recycling factor of the spliceosome, a machinery that forms on each precursor-messenger RNA (pre-mRNA) and catalyzes the removal of introns. Chaperones the re-annealing of U4 and U6 snRNAs (small nuclear RNAs) released from previous rounds of splicing, an initial step in reforming the U4/U6-U5 tri-snRNP (small nuclear ribonucleoprotein) that can reassemble into another spliceosome complex; this step involves binding U6 and facilitating the unwinding of the U6 internal stem loop, followed by base-pairing of U6 to U4. This chain is U4/U6 snRNA-associated-splicing factor PRP24 (PRP24), found in Saccharomyces cerevisiae (strain ATCC 204508 / S288c) (Baker's yeast).